A 683-amino-acid polypeptide reads, in one-letter code: Glycine--tRNA ligase beta subunit (683 aa).

This sequence belongs to the class-II aminoacyl-tRNA synthetase family. As to quaternary structure, tetramer of two alpha and two beta subunits.

Its subcellular location is the cytoplasm. The enzyme catalyses tRNA(Gly) + glycine + ATP = glycyl-tRNA(Gly) + AMP + diphosphate. In Pseudomonas putida (strain W619), this protein is Glycine--tRNA ligase beta subunit.